A 133-amino-acid chain; its full sequence is Profilin (133 aa).

The protein belongs to the profilin family. Occurs in many kinds of cells as a complex with monomeric actin in a 1:1 ratio.

Its subcellular location is the cytoplasm. The protein localises to the cytoskeleton. Functionally, binds to actin and affects the structure of the cytoskeleton. At high concentrations, profilin prevents the polymerization of actin, whereas it enhances it at low concentrations. By binding to PIP2, it inhibits the formation of IP3 and DG. In Helianthus annuus (Common sunflower), this protein is Profilin.